A 319-amino-acid chain; its full sequence is Cobalamin biosynthesis protein CbiB (319 aa).

The next 5 membrane-spanning stretches (helical) occupy residues 56-76 (VMWV…LALA), 82-102 (WFGW…RSLA), 153-173 (VDGI…LAMA), 204-224 (VANY…AGLC), and 296-316 (LMWV…CGLS).

It belongs to the CobD/CbiB family.

Its subcellular location is the cell membrane. It functions in the pathway cofactor biosynthesis; adenosylcobalamin biosynthesis. Functionally, converts cobyric acid to cobinamide by the addition of aminopropanol on the F carboxylic group. However, the true cosubstrate could be (R)-1-amino-2-propanol O-2-phosphate, leading to cobinamide phosphate. This chain is Cobalamin biosynthesis protein CbiB, found in Salmonella choleraesuis (strain SC-B67).